Consider the following 430-residue polypeptide: Glutamate-1-semialdehyde 2,1-aminomutase (430 aa).

N6-(pyridoxal phosphate)lysine is present on Lys-270.

Belongs to the class-III pyridoxal-phosphate-dependent aminotransferase family. HemL subfamily. As to quaternary structure, homodimer. It depends on pyridoxal 5'-phosphate as a cofactor.

It localises to the cytoplasm. It carries out the reaction (S)-4-amino-5-oxopentanoate = 5-aminolevulinate. Its pathway is porphyrin-containing compound metabolism; protoporphyrin-IX biosynthesis; 5-aminolevulinate from L-glutamyl-tRNA(Glu): step 2/2. The polypeptide is Glutamate-1-semialdehyde 2,1-aminomutase (Cupriavidus metallidurans (strain ATCC 43123 / DSM 2839 / NBRC 102507 / CH34) (Ralstonia metallidurans)).